Here is a 268-residue protein sequence, read N- to C-terminus: Regulation of nuclear pre-mRNA domain-containing protein 1A (268 aa).

The CID domain occupies 1 to 133; that stretch reads MSAFSEAALE…QLRQALYGDR (133 aa).

The protein belongs to the UPF0400 (RTT103) family. In terms of assembly, may form a heterodimer with RPRD1B. Associates with the RNA polymerase II subunit POLR2A (via CTD phosphorylated at 'Ser-2' and 'Ser-7' of the heptad repeats).

It localises to the nucleus. Functionally, interacts with phosphorylated C-terminal heptapeptide repeat domain (CTD) of the largest RNA polymerase II subunit POLR2A, and participates in dephosphorylation of the CTD by RPAP2. May act as a negative regulator of cyclin-D1 (CCND1) and cyclin-E (CCNE1) in the cell cycle. The sequence is that of Regulation of nuclear pre-mRNA domain-containing protein 1A (RPRD1A) from Gallus gallus (Chicken).